We begin with the raw amino-acid sequence, 353 residues long: E3 ubiquitin-protein ligase TRIM63 (353 aa).

Residues 23-79 (CPICLEMFTKPVVILPCQHNLCRKCANDIFQAANPYWTSRGSSVSMSGGRFRCPTCR) form an RING-type zinc finger. Residues 74–218 (RCPTCRHEVI…LSQKFDTLYA (145 aa)) form an interaction with TTN region. Residues 117–159 (GSHPMCKEHEDEKINIYCLTCEVPTCSMCKVFGIHKACEVAPL) form a B box-type zinc finger. The Zn(2+) site is built by cysteine 122, histidine 125, cysteine 145, and histidine 151. Residues 207 to 269 (EELSQKFDTL…VETAIQSLDE (63 aa)) are a coiled coil. The region spanning 267–325 (LDEPGGATFLLTAKQLIKSIVEASKGCQLGKTEQGFENMDFFTLDLEHIADALRAIDFG) is the COS domain. Over residues 326–344 (TDEEEEEFIEEEDQEEEES) the composition is skewed to acidic residues. Residues 326-353 (TDEEEEEFIEEEDQEEEESTEGKEEGHQ) form a disordered region.

In terms of assembly, homodimer. Homooligomer and heterooligomer. Interacts with SUMO2, titin/TTN and GMEB1. Interacts with TRIM54 and probably with TRIM55 and TNNI3. Forms a ternary complex with RACK1 and PRKCE. Interacts with CKM. As to expression, muscle specific. Selectively expressed in heart and skeletal muscle. Also expressed in the iris.

It is found in the cytoplasm. The protein localises to the nucleus. It localises to the myofibril. The protein resides in the sarcomere. Its subcellular location is the m line. It is found in the z line. It catalyses the reaction S-ubiquitinyl-[E2 ubiquitin-conjugating enzyme]-L-cysteine + [acceptor protein]-L-lysine = [E2 ubiquitin-conjugating enzyme]-L-cysteine + N(6)-ubiquitinyl-[acceptor protein]-L-lysine.. The protein operates within protein modification; protein ubiquitination. Functionally, E3 ubiquitin ligase. Mediates the ubiquitination and subsequent proteasomal degradation of CKM, GMEB1 and HIBADH. Regulates the proteasomal degradation of muscle proteins under amino acid starvation, where muscle protein is catabolized to provide other organs with amino acids. Inhibits de novo skeletal muscle protein synthesis under amino acid starvation. Regulates proteasomal degradation of cardiac troponin I/TNNI3 and probably of other sarcomeric-associated proteins. May play a role in striated muscle atrophy and hypertrophy by regulating an anti-hypertrophic PKC-mediated signaling pathway. May regulate the organization of myofibrils through TTN in muscle cells. The protein is E3 ubiquitin-protein ligase TRIM63 (TRIM63) of Homo sapiens (Human).